The sequence spans 146 residues: Ribosome maturation factor RimP (146 aa).

Belongs to the RimP family.

It is found in the cytoplasm. Functionally, required for maturation of 30S ribosomal subunits. The chain is Ribosome maturation factor RimP from Helicobacter pylori (strain G27).